A 366-amino-acid polypeptide reads, in one-letter code: MANLSSLPSPIYCVSFNQDNSGFAISWKDSFKIFDSTTGRLCYERAAGAFVIVEMLYSSDLLAIVGAGEQASLSPRRLCLFKTTTGLPLRELNFLTSILAVRMNKKRLVVVLLEKTFVYDLNTLVMLDTIDTVPNPKGLSAFSPSLEGCYLAVPASTTKGSVLVYNVMDLQSHSEIDAHRSPLAAIALSSNGMYIATGSEQGTLIRVHLVSEATKSYSFRRGTYPSTIYSLSFGPSTQLPDILIATSSSGSIHAFSLSLAINQRSKRSTSFLGSVLPDSVSDALDPAHHHVLQNAVSSGIRSYAVVRKIDKLEGTSSPSHFTSLRATVSVITYNGYFQEYTLSINNKNESLWTLEREFNLFSITTG.

WD repeat units follow at residues Ser6–Glu44, Ala178–Ser218, and Thr223–Ser265.

Belongs to the WD repeat PROPPIN family. Component of the PI(3,5)P2 regulatory complex at least composed of ATG18, SAC/FIG4, FAB1 and VAC14. In terms of tissue distribution, expressed in roots, stems, flowers and leaves.

Its subcellular location is the preautophagosomal structure membrane. The protein localises to the vacuole membrane. Functionally, the PI(3,5)P2 regulatory complex regulates both the synthesis and turnover of phosphatidylinositol 3,5-bisphosphate (PtdIns(3,5)P2). Required for autophagy. The chain is Autophagy-related protein 18b (ATG18B) from Arabidopsis thaliana (Mouse-ear cress).